Consider the following 516-residue polypeptide: Flavonoid 3',5'-hydroxylase (516 aa).

Cys-453 contacts heme.

This sequence belongs to the cytochrome P450 family. Heme is required as a cofactor.

The enzyme catalyses a 3',5'-unsubstituted flavanone + 2 reduced [NADPH--hemoprotein reductase] + 2 O2 = a 3',5'-dihydroxyflavanone + 2 oxidized [NADPH--hemoprotein reductase] + 2 H2O + 2 H(+). The protein operates within pigment biosynthesis; anthocyanin biosynthesis. Catalyzes the 3'5'-hydroxylation of naringenin and eriodictyol to form 5,7,3,'4',5'-pentahydroxyflavanone and 3',5'-hydroxylation of dihydrokaempferol and dihydroquercetin to form dihydromyricetin. This is Flavonoid 3',5'-hydroxylase (CYP75A4) from Gentiana triflora (Clustered gentian).